The sequence spans 46 residues: Light-harvesting protein B800/850/890 alpha-1 chain (46 aa).

At 1–12 (MWRLWKLYDPRR) the chain is on the cytoplasmic side. A helical membrane pass occupies residues 13 to 33 (VLIGIFSWLAVLALVIHFILL). His29 is an a bacteriochlorophyll binding site. The Periplasmic portion of the chain corresponds to 34–46 (STDRFNWVGGAAN).

The protein belongs to the antenna complex alpha subunit family. In terms of assembly, the core complex is formed by different alpha and beta chains, binding bacteriochlorophyll molecules, and arranged most probably in tetrameric structures disposed around the reaction center. The non-pigmented gamma chains may constitute additional components.

The protein localises to the cell inner membrane. Antenna complexes are light-harvesting systems, which transfer the excitation energy to the reaction centers. This is Light-harvesting protein B800/850/890 alpha-1 chain from Halorhodospira halophila (strain DSM 244 / SL1) (Ectothiorhodospira halophila (strain DSM 244 / SL1)).